The primary structure comprises 334 residues: N-acetyl-gamma-glutamyl-phosphate reductase (334 aa).

Cysteine 154 is an active-site residue.

Belongs to the NAGSA dehydrogenase family. Type 1 subfamily.

It localises to the cytoplasm. It carries out the reaction N-acetyl-L-glutamate 5-semialdehyde + phosphate + NADP(+) = N-acetyl-L-glutamyl 5-phosphate + NADPH + H(+). Its pathway is amino-acid biosynthesis; L-arginine biosynthesis; N(2)-acetyl-L-ornithine from L-glutamate: step 3/4. Its function is as follows. Catalyzes the NADPH-dependent reduction of N-acetyl-5-glutamyl phosphate to yield N-acetyl-L-glutamate 5-semialdehyde. This Escherichia coli (strain K12) protein is N-acetyl-gamma-glutamyl-phosphate reductase.